The chain runs to 343 residues: Probable F-box protein At1g67455 (343 aa).

Residues 1–46 (MMISDLPEDMVEEILSRVSIISLGALRWNDLSKARVICKAEARQQF) enclose the F-box domain.

The sequence is that of Probable F-box protein At1g67455 from Arabidopsis thaliana (Mouse-ear cress).